Here is a 205-residue protein sequence, read N- to C-terminus: Outer-membrane lipoprotein LolB (205 aa).

The first 17 residues, Met-1 to Gly-17, serve as a signal peptide directing secretion. A lipid anchor (N-palmitoyl cysteine) is attached at Cys-18. The S-diacylglycerol cysteine moiety is linked to residue Cys-18.

It belongs to the LolB family. Monomer.

Its subcellular location is the cell outer membrane. Plays a critical role in the incorporation of lipoproteins in the outer membrane after they are released by the LolA protein. The sequence is that of Outer-membrane lipoprotein LolB from Pseudomonas putida (strain W619).